A 185-amino-acid polypeptide reads, in one-letter code: ATP synthase subunit b, chloroplastic (185 aa).

A helical transmembrane segment spans residues leucine 31–leucine 49.

It belongs to the ATPase B chain family. In terms of assembly, F-type ATPases have 2 components, F(1) - the catalytic core - and F(0) - the membrane proton channel. F(1) has five subunits: alpha(3), beta(3), gamma(1), delta(1), epsilon(1). F(0) has four main subunits: a(1), b(1), b'(1) and c(10-14). The alpha and beta chains form an alternating ring which encloses part of the gamma chain. F(1) is attached to F(0) by a central stalk formed by the gamma and epsilon chains, while a peripheral stalk is formed by the delta, b and b' chains.

Its subcellular location is the plastid. The protein resides in the chloroplast thylakoid membrane. In terms of biological role, f(1)F(0) ATP synthase produces ATP from ADP in the presence of a proton or sodium gradient. F-type ATPases consist of two structural domains, F(1) containing the extramembraneous catalytic core and F(0) containing the membrane proton channel, linked together by a central stalk and a peripheral stalk. During catalysis, ATP synthesis in the catalytic domain of F(1) is coupled via a rotary mechanism of the central stalk subunits to proton translocation. Its function is as follows. Component of the F(0) channel, it forms part of the peripheral stalk, linking F(1) to F(0). The chain is ATP synthase subunit b, chloroplastic from Huperzia lucidula (Shining clubmoss).